We begin with the raw amino-acid sequence, 136 residues long: Large ribosomal subunit protein uL16 (136 aa).

The protein belongs to the universal ribosomal protein uL16 family. In terms of assembly, part of the 50S ribosomal subunit.

Functionally, binds 23S rRNA and is also seen to make contacts with the A and possibly P site tRNAs. This is Large ribosomal subunit protein uL16 from Karelsulcia muelleri (strain GWSS) (Sulcia muelleri).